Reading from the N-terminus, the 1128-residue chain is Mastermind-like protein 2 (1128 aa).

Disordered stretches follow at residues 1–22 (MGDT…GAGL) and 81–167 (QHGQ…GDQR). Positions 12–22 (GGLGGAPGAGL) are enriched in gly residues. A compositionally biased stretch (low complexity) spans 113-122 (PTASQTAAPA). At S177 the chain carries Phosphoserine. Disordered regions lie at residues 343 to 509 (FNID…GSNQ), 521 to 649 (SPSA…SNQP), 677 to 714 (QVSQ…GYMN), 758 to 794 (QDQI…GSST), and 1039 to 1073 (GTGL…QGTD). 2 stretches are compositionally biased toward polar residues: residues 347–357 (LGQQSQRSTPR) and 374–387 (GLTQ…QLRP). Low complexity predominate over residues 395-426 (SMASSGLSASSPIPSVPQSQAQPPPATGAARA). Residues 431–446 (QEVSHAQQLKQIAANR) are compositionally biased toward polar residues. 2 stretches are compositionally biased toward low complexity: residues 453–473 (HQQQ…SAGP) and 484–497 (PSPS…SPQS). Polar residues predominate over residues 566-584 (NSDQANQQMPSVLPSQSKP). Residues 590–649 (TQQQPQQSSITVQPQQQQQQPQQQQQPQQQQQPQPQQQQQQQPQAQQPAAQPTQPLSNQP) are compositionally biased toward low complexity. 3 stretches are compositionally biased toward polar residues: residues 677–695 (QVSQ…QNAG), 778–794 (NVGN…GSST), and 1039–1052 (GTGL…SQPP).

Belongs to the mastermind family. As to quaternary structure, interacts through its N-terminal region with the ankyrin repeat region of the Notch proteins NOTCH1, NOTCH2, NOTCH3 and NOTCH4. Forms a DNA-binding complex with Notch proteins and RBPSUH/RBP-J kappa.

It is found in the nucleus speckle. Its function is as follows. Acts as a transcriptional coactivator for NOTCH proteins. Has been shown to amplify NOTCH-induced transcription of HES1. Potentiates activation by NOTCH3 and NOTCH4 more efficiently than MAML1 or MAML3. This is Mastermind-like protein 2 (MAML2) from Bos taurus (Bovine).